We begin with the raw amino-acid sequence, 303 residues long: Sulfate adenylyltransferase subunit 2 (303 aa).

It belongs to the PAPS reductase family. CysD subfamily. As to quaternary structure, heterodimer composed of CysD, the smaller subunit, and CysN.

The catalysed reaction is sulfate + ATP + H(+) = adenosine 5'-phosphosulfate + diphosphate. The protein operates within sulfur metabolism; hydrogen sulfide biosynthesis; sulfite from sulfate: step 1/3. Functionally, with CysN forms the ATP sulfurylase (ATPS) that catalyzes the adenylation of sulfate producing adenosine 5'-phosphosulfate (APS) and diphosphate, the first enzymatic step in sulfur assimilation pathway. APS synthesis involves the formation of a high-energy phosphoric-sulfuric acid anhydride bond driven by GTP hydrolysis by CysN coupled to ATP hydrolysis by CysD. The sequence is that of Sulfate adenylyltransferase subunit 2 from Akkermansia muciniphila (strain ATCC BAA-835 / DSM 22959 / JCM 33894 / BCRC 81048 / CCUG 64013 / CIP 107961 / Muc).